The following is a 199-amino-acid chain: Large ribosomal subunit protein bL9 (199 aa).

The disordered stretch occupies residues 153–199; it reads KPVKASEKKGRRPRRDEEASDEQILAEENSVTEEAVSEEIQNSESEN.

It belongs to the bacterial ribosomal protein bL9 family.

Binds to the 23S rRNA. The polypeptide is Large ribosomal subunit protein bL9 (Treponema denticola (strain ATCC 35405 / DSM 14222 / CIP 103919 / JCM 8153 / KCTC 15104)).